The following is a 180-amino-acid chain: Translation initiation factor IF-3 (180 aa).

It belongs to the IF-3 family. In terms of assembly, monomer.

The protein resides in the cytoplasm. Its function is as follows. IF-3 binds to the 30S ribosomal subunit and shifts the equilibrium between 70S ribosomes and their 50S and 30S subunits in favor of the free subunits, thus enhancing the availability of 30S subunits on which protein synthesis initiation begins. The chain is Translation initiation factor IF-3 from Xylella fastidiosa (strain 9a5c).